Here is a 682-residue protein sequence, read N- to C-terminus: Potassium-transporting ATPase ATP-binding subunit (682 aa).

Transmembrane regions (helical) follow at residues 34–54 (PVMF…LAMV), 58–78 (IAGS…TVLF), 219–239 (IALT…TATL), and 254–274 (VLVA…LSAI). The active-site 4-aspartylphosphate intermediate is D307. Residues D344, E348, 377–384 (FTAQSRMS), and K395 contribute to the ATP site. The Mg(2+) site is built by D518 and D522. Helical transmembrane passes span 588-608 (FAII…LNVM), 616-636 (AILS…PLAL), and 662-682 (LVVP…LGLA).

Belongs to the cation transport ATPase (P-type) (TC 3.A.3) family. Type IA subfamily. The system is composed of three essential subunits: KdpA, KdpB and KdpC.

It is found in the cell inner membrane. The enzyme catalyses K(+)(out) + ATP + H2O = K(+)(in) + ADP + phosphate + H(+). Part of the high-affinity ATP-driven potassium transport (or Kdp) system, which catalyzes the hydrolysis of ATP coupled with the electrogenic transport of potassium into the cytoplasm. This subunit is responsible for energy coupling to the transport system and for the release of the potassium ions to the cytoplasm. This chain is Potassium-transporting ATPase ATP-binding subunit, found in Salmonella agona (strain SL483).